The following is a 131-amino-acid chain: C-glycoside deglycosidase beta subunit (131 aa).

Belongs to the C-glycoside deglycosidase beta subunit family. As to quaternary structure, heterodimer composed of an alpha subunit (CarB1) and a beta subunit (CarC1). Mg(2+) serves as cofactor.

It carries out the reaction 3''-dehydroisovitexin = 1,5-anhydro-D-erythro-hex-1-en-3-ulose + apigenin. With respect to regulation, activity is strongly reduced in the presence of chelating agents. Carbon-carbon bond-cleaving enzyme which participates in the metabolism of C-glycosides. Acts on the C6-glycosylated compound 3''-dehydroisovitexin (3''-oxo-isovitexin). Shows weak activity with 3''-dehydroisoorientin (3''-oxo-homoorientin) and 3'-dehydromangiferin (3'-oxo-mangiferin). The polypeptide is C-glycoside deglycosidase beta subunit (Arthrobacter globiformis (strain ATCC 8010 / DSM 20124 / JCM 1332 / NBRC 12137 / NCIMB 8907 / NRRL B-2979 / 168)).